Consider the following 254-residue polypeptide: Ribosomal RNA small subunit methyltransferase G (254 aa).

Residues G84, F89, 136–137 (VE), and R155 contribute to the S-adenosyl-L-methionine site.

Belongs to the methyltransferase superfamily. RNA methyltransferase RsmG family.

The protein localises to the cytoplasm. In terms of biological role, specifically methylates the N7 position of a guanine in 16S rRNA. This is Ribosomal RNA small subunit methyltransferase G from Synechococcus sp. (strain CC9311).